Consider the following 363-residue polypeptide: Dihydroorotate dehydrogenase (quinone) (363 aa).

FMN-binding positions include 67-71 (AGYDK) and Thr91. A substrate-binding site is contributed by Lys71. Position 116-120 (116-120 (NRMGF)) interacts with substrate. FMN-binding residues include Asn145 and Asn178. Residue Asn178 coordinates substrate. Residue Ser181 is the Nucleophile of the active site. Residue Asn183 participates in substrate binding. 2 residues coordinate FMN: Lys224 and Thr254. 255–256 (NT) is a binding site for substrate. FMN-binding positions include Gly275, Gly304, and 325-326 (YS).

This sequence belongs to the dihydroorotate dehydrogenase family. Type 2 subfamily. Monomer. It depends on FMN as a cofactor.

It is found in the cell membrane. It catalyses the reaction (S)-dihydroorotate + a quinone = orotate + a quinol. Its pathway is pyrimidine metabolism; UMP biosynthesis via de novo pathway; orotate from (S)-dihydroorotate (quinone route): step 1/1. In terms of biological role, catalyzes the conversion of dihydroorotate to orotate with quinone as electron acceptor. The protein is Dihydroorotate dehydrogenase (quinone) of Acidithiobacillus ferrooxidans (strain ATCC 23270 / DSM 14882 / CIP 104768 / NCIMB 8455) (Ferrobacillus ferrooxidans (strain ATCC 23270)).